A 189-amino-acid chain; its full sequence is Peptidyl-tRNA hydrolase (189 aa).

Tyrosine 15 serves as a coordination point for tRNA. Histidine 20 (proton acceptor) is an active-site residue. Residues phenylalanine 66, asparagine 68, and asparagine 114 each contribute to the tRNA site.

It belongs to the PTH family. In terms of assembly, monomer.

It is found in the cytoplasm. It carries out the reaction an N-acyl-L-alpha-aminoacyl-tRNA + H2O = an N-acyl-L-amino acid + a tRNA + H(+). In terms of biological role, hydrolyzes ribosome-free peptidyl-tRNAs (with 1 or more amino acids incorporated), which drop off the ribosome during protein synthesis, or as a result of ribosome stalling. Catalyzes the release of premature peptidyl moieties from peptidyl-tRNA molecules trapped in stalled 50S ribosomal subunits, and thus maintains levels of free tRNAs and 50S ribosomes. The polypeptide is Peptidyl-tRNA hydrolase (Streptococcus thermophilus (strain CNRZ 1066)).